The primary structure comprises 162 residues: Transcription elongation factor GreA (162 aa).

Positions 9 to 38 (QGYKALEEELARLKSERPEIIQAIKEAREE) form a coiled coil.

It belongs to the GreA/GreB family.

Its function is as follows. Necessary for efficient RNA polymerase transcription elongation past template-encoded arresting sites. The arresting sites in DNA have the property of trapping a certain fraction of elongating RNA polymerases that pass through, resulting in locked ternary complexes. Cleavage of the nascent transcript by cleavage factors such as GreA or GreB allows the resumption of elongation from the new 3'terminus. GreA releases sequences of 2 to 3 nucleotides. This Desulfovibrio desulfuricans (strain ATCC 27774 / DSM 6949 / MB) protein is Transcription elongation factor GreA.